The following is a 516-amino-acid chain: Squalene epoxidase 5 (516 aa).

2 helical membrane-spanning segments follow: residues 3-23 (FTNV…VFYV) and 45-65 (ATDV…YALA). Residues 55–56 (VG), 75–76 (ER), Arg83, Phe88, Arg156, Val172, Asp335, and Met348 each bind FAD. A helical membrane pass occupies residues 446–466 (LIYHLCAITLSSIGHLLSPFP).

This sequence belongs to the squalene monooxygenase family. The cofactor is FAD. Expressed in seedlings, leaves, stems and inflorescences. Detected in siliques.

Its subcellular location is the membrane. The catalysed reaction is squalene + reduced [NADPH--hemoprotein reductase] + O2 = (S)-2,3-epoxysqualene + oxidized [NADPH--hemoprotein reductase] + H2O + H(+). The protein operates within terpene metabolism; lanosterol biosynthesis; lanosterol from farnesyl diphosphate: step 2/3. Its function is as follows. Catalyzes the stereospecific oxidation of squalene to (S)-2,3-epoxysqualene, and is considered to be a rate-limiting enzyme in steroid biosynthesis. This Arabidopsis thaliana (Mouse-ear cress) protein is Squalene epoxidase 5 (SQE5).